A 196-amino-acid polypeptide reads, in one-letter code: DnaA initiator-associating protein DiaA (196 aa).

One can recognise an SIS domain in the interval 34-196; the sequence is LVQSLLNGNK…DNTLFPHQDD (163 aa).

It belongs to the SIS family. DiaA subfamily. As to quaternary structure, homotetramer; dimer of dimers.

Required for the timely initiation of chromosomal replication via direct interactions with the DnaA initiator protein. The polypeptide is DnaA initiator-associating protein DiaA (Klebsiella pneumoniae (strain 342)).